The sequence spans 610 residues: MNSQELKNRQEKIRNFSIIAHIDHGKSTLADRILEKTETVSSREMQAQLLDSMDLERERGITIKLNAIELNYTAKDGETYILHLIDTPGHVDFTYEVSRSLAACEGAVLVVDAAQGIEAQTLANVYLALDNDLEILPVINKIDLPAADPERVRQEIEDVIGLDASEAVLASAKAGIGIEEILEQIVEKVPAPSGDVDAPLQALIFDSVYDAYRGVILQVRIINGVVKPGDKIQMMSNGKSFDVTEVGIFTPKAVGRDFLATGDVGYIAASIKTVADTRVGDTVTLANNPASEPLDGYKQMNPMVFAGLYPIESNKYNDLREALEKLQLNDASLQFEPETSQALGFGFRCGFLGLLHMDVIQERLEREFNIDLIMTAPSVVYHINTTDGEMLAVSNPSEFPDPTKVDSIEEPYVKAQIMVPQEFVGAVMELAQRKRGDFVTMDYIDDNRVNVIYQIPLAEIVFDFFDKLKSSTRGYASFDYEISEYRKSQLVKMDILLNGDKVDALSFIVHREFAYERGKLIVEKLKKIIPRQQFEVPIQAAIGQKIVARSDIKALRKNVLAKCYGGDVSRKRKLLEKQKAGKKRMKAIGSVEVPQEAFLSVLSMDEDTKK.

A tr-type G domain is found at 11–193 (EKIRNFSIIA…QIVEKVPAPS (183 aa)). Residues 23–28 (DHGKST) and 140–143 (NKID) each bind GTP.

The protein belongs to the TRAFAC class translation factor GTPase superfamily. Classic translation factor GTPase family. LepA subfamily.

Its subcellular location is the cell membrane. The enzyme catalyses GTP + H2O = GDP + phosphate + H(+). In terms of biological role, required for accurate and efficient protein synthesis under certain stress conditions. May act as a fidelity factor of the translation reaction, by catalyzing a one-codon backward translocation of tRNAs on improperly translocated ribosomes. Back-translocation proceeds from a post-translocation (POST) complex to a pre-translocation (PRE) complex, thus giving elongation factor G a second chance to translocate the tRNAs correctly. Binds to ribosomes in a GTP-dependent manner. This chain is Elongation factor 4, found in Streptococcus uberis (strain ATCC BAA-854 / 0140J).